The primary structure comprises 262 residues: Ribosomal RNA small subunit methyltransferase A (262 aa).

Residues N20, L22, G47, E68, D90, and N110 each coordinate S-adenosyl-L-methionine.

It belongs to the class I-like SAM-binding methyltransferase superfamily. rRNA adenine N(6)-methyltransferase family. RsmA subfamily.

The protein localises to the cytoplasm. It carries out the reaction adenosine(1518)/adenosine(1519) in 16S rRNA + 4 S-adenosyl-L-methionine = N(6)-dimethyladenosine(1518)/N(6)-dimethyladenosine(1519) in 16S rRNA + 4 S-adenosyl-L-homocysteine + 4 H(+). In terms of biological role, specifically dimethylates two adjacent adenosines (A1518 and A1519) in the loop of a conserved hairpin near the 3'-end of 16S rRNA in the 30S particle. May play a critical role in biogenesis of 30S subunits. This chain is Ribosomal RNA small subunit methyltransferase A, found in Chlorobium phaeobacteroides (strain BS1).